Consider the following 151-residue polypeptide: Small ribosomal subunit protein uS9 (151 aa).

Residues 1–19 show a composition bias toward low complexity; the sequence is MTETTPAPQTPAAPAGPAQ. 2 disordered regions span residues 1 to 20 and 121 to 151; these read MTET…PAQS and KAGF…YSKR. The span at 127-136 shows a compositional bias: basic and acidic residues; the sequence is RDPRATERKK. Positions 137 to 151 are enriched in basic residues; it reads YGLKKARKAPQYSKR.

This sequence belongs to the universal ribosomal protein uS9 family.

In Mycobacterium bovis (strain ATCC BAA-935 / AF2122/97), this protein is Small ribosomal subunit protein uS9 (rpsI).